The following is a 271-amino-acid chain: 3-methyl-2-oxobutanoate hydroxymethyltransferase (271 aa).

Residues aspartate 52 and aspartate 91 each coordinate Mg(2+). 3-methyl-2-oxobutanoate-binding positions include 52–53 (DS), aspartate 91, and lysine 121. Residue glutamate 123 participates in Mg(2+) binding. The active-site Proton acceptor is the glutamate 189.

It belongs to the PanB family. Homodecamer; pentamer of dimers. Mg(2+) serves as cofactor.

The protein localises to the cytoplasm. It catalyses the reaction 3-methyl-2-oxobutanoate + (6R)-5,10-methylene-5,6,7,8-tetrahydrofolate + H2O = 2-dehydropantoate + (6S)-5,6,7,8-tetrahydrofolate. It functions in the pathway cofactor biosynthesis; (R)-pantothenate biosynthesis; (R)-pantoate from 3-methyl-2-oxobutanoate: step 1/2. Catalyzes the reversible reaction in which hydroxymethyl group from 5,10-methylenetetrahydrofolate is transferred onto alpha-ketoisovalerate to form ketopantoate. This Acidothermus cellulolyticus (strain ATCC 43068 / DSM 8971 / 11B) protein is 3-methyl-2-oxobutanoate hydroxymethyltransferase.